The primary structure comprises 739 residues: Potassium transporter 26 (739 aa).

The Cytoplasmic portion of the chain corresponds to 1 to 81; sequence MEYHHRPHSP…RQVALLSFQS (81 aa). Residues 82–102 form a helical membrane-spanning segment; it reads LGVVYGDLGTSPLYVFSSISL. Topologically, residues 103–112 are extracellular; sequence DDPGEADFVG. A helical transmembrane segment spans residues 113-133; it reads ILSIILWTFTMICLVKYVFIV. At 134 to 198 the chain is on the cytoplasmic side; that stretch reads LKADDHGEGG…KFLEQSTKWQ (65 aa). A helical membrane pass occupies residues 199–219; that stretch reads AVITYIVLAGTCMVLGDGALT. At 220–236 the chain is on the extracellular side; the sequence is PAISVLSAVQGIQSRSS. Residues 237 to 257 traverse the membrane as a helical segment; it reads SITQAHVVLLSVIILFILFFF. Topologically, residues 258-268 are cytoplasmic; the sequence is QKHGTSKVSFT. The helical transmembrane segment at 269–289 threads the bilayer; sequence FSPIMILWFTFVAFIGLYNII. Topologically, residues 290-318 are extracellular; it reads KHYPPILKAVSPHYIIIYFIRNKRAAWET. Residues 319 to 339 traverse the membrane as a helical segment; sequence LGAIVLCITGAEAMFADLGHF. Residues 340–347 lie on the Cytoplasmic side of the membrane; that stretch reads NKSSIQMA. A helical transmembrane segment spans residues 348–368; that stretch reads FSVIVYPSMILAYAGQAAFLV. Over 369–385 the chain is Extracellular; the sequence is KNPSKLSTTFYSSTPEP. The chain crosses the membrane as a helical span at residues 386–406; sequence LFWPMFIIATLAAIVASQALI. Topologically, residues 407-437 are cytoplasmic; sequence SASFSIIRQSIALGCFPRVTMKHTSGKHEGQ. The helical transmembrane segment at 438-458 threads the bilayer; sequence VYSPEINYFLMVACILITVGF. Residues 459–469 lie on the Extracellular side of the membrane; that stretch reads KGGPEIGQAFG. The helical transmembrane segment at 470 to 490 threads the bilayer; that stretch reads VAVIFVMLFTTNLMTVVMLII. The Cytoplasmic portion of the chain corresponds to 491 to 494; it reads WESN. A helical transmembrane segment spans residues 495 to 515; it reads IALASLFFVFFFSIEGIYMTS. Over 516 to 519 the chain is Extracellular; it reads LMNK. The helical transmembrane segment at 520–540 threads the bilayer; that stretch reads ILQGGWVPFAITAFFLIITLS. The Cytoplasmic segment spans residues 541–739; that stretch reads WTYGRSKKGE…TLQVGMLYEI (199 aa).

The protein belongs to the HAK/KUP transporter (TC 2.A.72.3) family.

The protein localises to the membrane. Its function is as follows. High-affinity potassium transporter. This Oryza sativa subsp. japonica (Rice) protein is Potassium transporter 26 (HAK26).